The sequence spans 72 residues: Holocyclotoxin-1 (72 aa).

The signal sequence occupies residues 1–22; that stretch reads MSKVTTVFIGALVLLLLIENGF. 4 disulfide bridges follow: C24/C40, C32/C57, C36/C60, and C42/C70.

In terms of tissue distribution, expressed in salivary glands.

Its subcellular location is the secreted. Probable neurotoxin. This is Holocyclotoxin-1 from Ixodes holocyclus (Australian paralysis tick).